Here is a 153-residue protein sequence, read N- to C-terminus: Superoxide dismutase [Cu-Zn] (153 aa).

Cu cation contacts are provided by His-45, His-47, and His-62. Cys-56 and Cys-145 are joined by a disulfide. The Zn(2+) site is built by His-62, His-70, His-79, and Asp-82. His-119 serves as a coordination point for Cu cation.

Belongs to the Cu-Zn superoxide dismutase family. Homodimer. Requires Cu cation as cofactor. Zn(2+) is required as a cofactor.

The protein localises to the cytoplasm. It carries out the reaction 2 superoxide + 2 H(+) = H2O2 + O2. Destroys radicals which are normally produced within the cells and which are toxic to biological systems. The protein is Superoxide dismutase [Cu-Zn] of Drosophila willistoni (Fruit fly).